A 123-amino-acid chain; its full sequence is MPTINQLVRKGRVAITAKSKVPALEACPQKRGVCTRVYTTTPKKPNSALRKVCKVRLTNGFEVISYIGGEGHNLQEHSVVLIRGGRVKDLPGVRYHTVRGSLDTAGVKDRKQARSKYGAKRPK.

Asp89 carries the 3-methylthioaspartic acid modification. A disordered region spans residues 104-123 (TAGVKDRKQARSKYGAKRPK). Positions 113-123 (ARSKYGAKRPK) are enriched in basic residues.

It belongs to the universal ribosomal protein uS12 family. In terms of assembly, part of the 30S ribosomal subunit. Contacts proteins S8 and S17. May interact with IF1 in the 30S initiation complex.

Its function is as follows. With S4 and S5 plays an important role in translational accuracy. In terms of biological role, interacts with and stabilizes bases of the 16S rRNA that are involved in tRNA selection in the A site and with the mRNA backbone. Located at the interface of the 30S and 50S subunits, it traverses the body of the 30S subunit contacting proteins on the other side and probably holding the rRNA structure together. The combined cluster of proteins S8, S12 and S17 appears to hold together the shoulder and platform of the 30S subunit. The sequence is that of Small ribosomal subunit protein uS12 from Chromobacterium violaceum (strain ATCC 12472 / DSM 30191 / JCM 1249 / CCUG 213 / NBRC 12614 / NCIMB 9131 / NCTC 9757 / MK).